We begin with the raw amino-acid sequence, 741 residues long: Alpha-1,6-mannosylglycoprotein 6-beta-N-acetylglucosaminyltransferase A (741 aa).

Over 1-13 (MALFTPWKLSSQK) the chain is Cytoplasmic. Residues 14–30 (LGFFLVTFGFIWGMMLL) traverse the membrane as a helical; Signal-anchor for type II membrane protein segment. Residues 31 to 741 (HFTIQQRTQP…GQVALCKDCL (711 aa)) are Lumenal-facing. Residues N110, N115, and N118 are each glycosylated (N-linked (GlcNAc...) asparagine). 9 disulfides stabilise this stretch: C145–C183, C156–C196, C172–C338, C372–C626, C649–C724, C653–C726, C660–C713, C681–C702, and C737–C740. The interval 213-741 (NSLAEIRTDF…GQVALCKDCL (529 aa)) is sufficient for catalytic activity. Residues 264 to 269 (KRKRKK) are important for activity in FGF2 release. The N-linked (GlcNAc...) asparagine glycan is linked to N334. 378–379 (DS) is a binding site for substrate. 2 N-linked (GlcNAc...) asparagine glycosylation sites follow: N433 and N447. A UDP-N-acetyl-alpha-D-glucosamine-binding site is contributed by E526. K554 serves as a coordination point for substrate.

It belongs to the glycosyltransferase 18 family. In terms of processing, N-glycosylated. Post-translationally, a secreted form is released from the membrane after cleavage by gamma-secretase.

The protein localises to the golgi apparatus membrane. It is found in the secreted. The enzyme catalyses N(4)-{beta-D-GlcNAc-(1-&gt;2)-[beta-D-GlcNAc-(1-&gt;4)]-alpha-D-Man-(1-&gt;3)-[beta-D-GlcNAc-(1-&gt;2)-alpha-D-Man-(1-&gt;6)]-beta-D-Man-(1-&gt;4)-beta-D-GlcNAc-(1-&gt;4)-beta-D-GlcNAc}-L-asparaginyl-[protein] + UDP-N-acetyl-alpha-D-glucosamine = N(4)-{beta-D-GlcNAc-(1-&gt;2)-[beta-D-GlcNAc-(1-&gt;4)]-alpha-D-Man-(1-&gt;3)-[beta-D-GlcNAc-(1-&gt;2)-[beta-D-GlcNAc-(1-&gt;6)]-alpha-D-Man-(1-&gt;6)]-beta-D-Man-(1-&gt;4)-beta-D-GlcNAc-(1-&gt;4)-beta-D-GlcNAc}-L-asparaginyl-[protein] + UDP + H(+). It functions in the pathway protein modification; protein glycosylation. With respect to regulation, activity is increased by Mn(2+) and Mg(2+). Its function is as follows. Catalyzes the addition of N-acetylglucosamine (GlcNAc) in beta 1-6 linkage to the alpha-linked mannose of biantennary N-linked oligosaccharides. Catalyzes an important step in the biosynthesis of branched, complex-type N-glycans, such as those found on EGFR, TGFR (TGF-beta receptor) and CDH2. Via its role in the biosynthesis of complex N-glycans, plays an important role in the activation of cellular signaling pathways, reorganization of the actin cytoskeleton, cell-cell adhesion and cell migration. MGAT5-dependent EGFR N-glycosylation enhances the interaction between EGFR and LGALS3 and thereby prevents rapid EGFR endocytosis and prolongs EGFR signaling. Required for efficient interaction between TGFB1 and its receptor. Enhances activation of intracellular signaling pathways by several types of growth factors, including FGF2, PDGF, IGF, TGFB1 and EGF. MGAT5-dependent CDH2 N-glycosylation inhibits CDH2-mediated homotypic cell-cell adhesion and contributes to the regulation of downstream signaling pathways. Promotes cell migration. Contributes to the regulation of the inflammatory response. MGAT5-dependent TCR N-glycosylation enhances the interaction between TCR and LGALS3, limits agonist-induced TCR clustering, and thereby dampens TCR-mediated responses to antigens. Required for normal leukocyte evasation and accumulation at sites of inflammation. Inhibits attachment of monocytes to the vascular endothelium and subsequent monocyte diapedesis. In terms of biological role, promotes proliferation of umbilical vein endothelial cells and angiogenesis, at least in part by promoting the release of the growth factor FGF2 from the extracellular matrix. This Homo sapiens (Human) protein is Alpha-1,6-mannosylglycoprotein 6-beta-N-acetylglucosaminyltransferase A (MGAT5).